Here is a 59-residue protein sequence, read N- to C-terminus: UPF0181 protein YoaH (59 aa).

It belongs to the UPF0181 family.

This is UPF0181 protein YoaH from Shigella sonnei (strain Ss046).